We begin with the raw amino-acid sequence, 87 residues long: MANIKSKQKAILYNQKANAYNSAVKSTVKTAIKKAKLAADQQDAKLSDFVSKAHHEIDKAVSKGVLHKNNGSRKASRLDAYVQSKQQ.

Residues 67-87 are disordered; that stretch reads HKNNGSRKASRLDAYVQSKQQ.

The protein belongs to the bacterial ribosomal protein bS20 family.

Binds directly to 16S ribosomal RNA. This chain is Small ribosomal subunit protein bS20, found in Metamycoplasma arthritidis (strain 158L3-1) (Mycoplasma arthritidis).